Here is a 338-residue protein sequence, read N- to C-terminus: DNA-directed RNA polymerase subunit alpha (338 aa).

The interval 1–226 is alpha N-terminal domain (alpha-NTD); the sequence is MLIAQRPTLT…ELFGLARELN (226 aa). The tract at residues 243 to 338 is alpha C-terminal domain (alpha-CTD); it reads LAADLALPIE…DADYADEQYN (96 aa).

The protein belongs to the RNA polymerase alpha chain family. Homodimer. The RNAP catalytic core consists of 2 alpha, 1 beta, 1 beta' and 1 omega subunit. When a sigma factor is associated with the core the holoenzyme is formed, which can initiate transcription.

It catalyses the reaction RNA(n) + a ribonucleoside 5'-triphosphate = RNA(n+1) + diphosphate. DNA-dependent RNA polymerase catalyzes the transcription of DNA into RNA using the four ribonucleoside triphosphates as substrates. This chain is DNA-directed RNA polymerase subunit alpha, found in Beutenbergia cavernae (strain ATCC BAA-8 / DSM 12333 / CCUG 43141 / JCM 11478 / NBRC 16432 / NCIMB 13614 / HKI 0122).